A 181-amino-acid chain; its full sequence is 28 kDa heat- and acid-stable phosphoprotein (181 aa).

Residues 1–14 (MPKGGRKGGHKGRV) are compositionally biased toward basic residues. The segment at 1 to 118 (MPKGGRKGGH…RREREEIEKQ (118 aa)) is disordered. A Phosphothreonine modification is found at T18. Phosphoserine is present on S19. Over residues 50 to 59 (DPKKEKKSLD) the composition is skewed to basic and acidic residues. K52 is covalently cross-linked (Glycyl lysine isopeptide (Lys-Gly) (interchain with G-Cter in SUMO2)). 3 positions are modified to phosphoserine: S57, S60, and S63. Residues 60–69 (SDESEDEDDD) are compositionally biased toward acidic residues. Y70 bears the Phosphotyrosine mark. The segment covering 102 to 118 (DGPKELSRREREEIEKQ) has biased composition (basic and acidic residues). K126 carries the post-translational modification N6-methyllysine. An N6-acetyllysine mark is found at K132 and K164. Residues 151–167 (EEAARKKEEERKAKDDA) are compositionally biased toward basic and acidic residues. Residues 151-181 (EEAARKKEEERKAKDDATLSGKRMQSLSLNK) form a disordered region. Phosphoserine occurs at positions 176 and 178.

Belongs to the PDAP1 family. In terms of processing, phosphorylated by several kinases in vitro. In vivo, can be phosphorylated by CK2. Present in all tissues tested, including brain, lung, spleen, kidney, liver, heart, and muscle, in decreasing order of abundance.

The chain is 28 kDa heat- and acid-stable phosphoprotein (Pdap1) from Rattus norvegicus (Rat).